The following is a 183-amino-acid chain: TATA-box-binding protein 2 (183 aa).

Repeat copies occupy residues 8-84 and 99-177.

It belongs to the TBP family.

General factor that plays a role in the activation of archaeal genes transcribed by RNA polymerase. Binds specifically to the TATA box promoter element which lies close to the position of transcription initiation. This chain is TATA-box-binding protein 2, found in Methanosarcina mazei (strain ATCC BAA-159 / DSM 3647 / Goe1 / Go1 / JCM 11833 / OCM 88) (Methanosarcina frisia).